We begin with the raw amino-acid sequence, 1746 residues long: Non-reducing polyketide synthase ptaA (1746 aa).

The N-terminal acylcarrier protein transacylase domain (SAT) stretch occupies residues 4–227; the sequence is NSGSGTSPWG…ALPVYGGLCH (224 aa). Residues 361 to 796 enclose the Ketosynthase family 3 (KS3) domain; sequence QSKIAIVGMS…GGNTTIAIEE (436 aa). Catalysis depends on for beta-ketoacyl synthase activity residues Cys534, His670, and His714. Positions 898–1218 are malonyl-CoA:ACP transacylase (MAT) domain; the sequence is FAFTGQGASY…LGALHLAGIP (321 aa). The product template (PT) domain stretch occupies residues 1286–1605; it reads TSTVHRVIGE…RLLLDRFFSA (320 aa). Residues 1290 to 1425 are N-terminal hotdog fold; the sequence is HRVIGETFDG…ATLFYGKAND (136 aa). The 311-residue stretch at 1290 to 1600 folds into the PKS/mFAS DH domain; that stretch reads HRVIGETFDG…FRRYPRLLLD (311 aa). Residue His1322 is the Proton acceptor; for dehydratase activity of the active site. Positions 1452–1600 are C-terminal hotdog fold; that stretch reads VANRFSRNMA…FRRYPRLLLD (149 aa). Asp1511 functions as the Proton donor; for dehydratase activity in the catalytic mechanism. One can recognise a Carrier domain in the interval 1671–1745; that stretch reads DSITVKAMAL…DLRAWLLEYY (75 aa). O-(pantetheine 4'-phosphoryl)serine is present on Ser1705.

The catalysed reaction is holo-[ACP] + 8 malonyl-CoA + 8 H(+) = atrochrysone carboxyl-[ACP] + 8 CO2 + 8 CoA + 2 H2O. The protein operates within secondary metabolite biosynthesis. Functionally, non-reducing polyketide synthase; part of the gene cluster that mediates the biosynthesis of pestheic acid, a diphenyl ether which is a biosynthetic precursor of the unique chloropupukeananes. The biosynthesis initiates from condensation of acetate and malonate units catalyzed by the non-reducing PKS ptaA. As the ptaA protein is TE/CLC domain-deficient, hydrolysis and Claisen cyclization of the polyketide could be catalyzed by ptaB containing a beta-lactamase domain. The ptaB protein might hydrolyze the thioester bond between the ACP of ptaA and the intermediate to release atrochrysone carboxylic acid, which is spontaneously dehydrated to form endocrocin anthrone. Endocrocin anthrone is then converted to endocrocin, catalyzed by the anthrone oxygenase ptaC. Spontaneous decarboxylation of endocrocin occurs to generate emodin. An O-methyltransferase (ptaH or ptaI) could methylate emodin to form physcion. PtaJ could then catalyze the oxidative cleavage of physcion, and rotation of the intermediate could then afford desmethylisosulochrin. PtaF, a putative NADH-dependent oxidoreductase, might also participate in the oxidative cleavage step. Desmethylisosulochrin is then transformed by another O-methyltransferase (ptaH or ptaI) to form isosulochrin. Chlorination of isosulochrin by ptaM in the cyclohexadienone B ring then produces chloroisosulochrin. PtaE is responsible for the oxidative coupling reactions of both benzophenones isosulochrin and chloroisosulochrin to RES-1214-1 and pestheic acid respectively, regardless of chlorination. The polypeptide is Non-reducing polyketide synthase ptaA (Pestalotiopsis fici (strain W106-1 / CGMCC3.15140)).